The chain runs to 1048 residues: NACHT, LRR and PYD domains-containing protein 8 (1048 aa).

Residues 1-23 (MSDVNPPSDTPIPFSSSSTHSSH) are disordered. A compositionally biased stretch (low complexity) spans 11-23 (PIPFSSSSTHSSH). One can recognise a Pyrin domain in the interval 33-131 (PGSPCENGVM…NAILPTLEPE (99 aa)). The region spanning 204-527 (KTVAIQGAPG…FYVLCFPQRL (324 aa)) is the NACHT domain. 210–217 (GAPGIGKT) provides a ligand contact to ATP. LRR repeat units follow at residues 815-838 (NGHL…YLSV), 839-861 (AQLE…SLAS), 866-890 (SKML…IWNA), 923-950 (NKTL…ALKN), and 980-1007 (NQHL…AFSS). The tract at residues 1029 to 1048 (PTPHPPDFTGKSDCLSQINP) is disordered.

This sequence belongs to the NLRP family.

Its subcellular location is the cytoplasm. Its function is as follows. Involved in inflammation. This chain is NACHT, LRR and PYD domains-containing protein 8 (NLRP8), found in Homo sapiens (Human).